A 681-amino-acid chain; its full sequence is Pentatricopeptide repeat-containing protein At2g22410, mitochondrial (681 aa).

The N-terminal 32 residues, 1 to 32 (MNISKAKLLLLPPPLTPKLNRSLYSHSQRRTR), are a transit peptide targeting the mitochondrion. PPR repeat units follow at residues 117–151 (NIFS…GCCE), 155–189 (DHFT…RLEL), 190–220 (VSHV…SPVR), 221–255 (DLVS…GVKP), 256–290 (DDVT…GLRM), 291–321 (TIPL…LEKR), 322–356 (TIVS…DVVL), 357–387 (WNAM…NTKP), 388–422 (DEIT…SLSL), 423–453 (NVAL…IQTR), 454–488 (NSLT…GIAP), 489–519 (DEIT…MKSR), and 525–555 (QLKH…MPME). Positions 560-635 (VWGALLFGCR…IPGCSSIEVN (76 aa)) are type E motif. Residues 636-666 (GIVCEFIVRDKSRPESEKIYDRLHCLGRHMR) form a type E(+) motif region.

Belongs to the PPR family. PCMP-E subfamily.

The protein localises to the mitochondrion. This Arabidopsis thaliana (Mouse-ear cress) protein is Pentatricopeptide repeat-containing protein At2g22410, mitochondrial (PCMP-E28).